Consider the following 404-residue polypeptide: Double-stranded RNA-binding protein 5 (404 aa).

DRBM domains are found at residues 1–70 (MYKN…RLSL) and 87–155 (VYKN…SLKQ). 3 disordered regions span residues 195–236 (RRRR…STEE), 263–320 (GGRT…RRNA), and 336–362 (RRRPDEALRRRRRVPRAAGGERPFSDP). Low complexity predominate over residues 263 to 280 (GGRTQDTASPAPAAAAAS). Over residues 302 to 316 (AGAHAARRHAARQGG) the composition is skewed to basic residues.

Its function is as follows. Binds double-stranded RNA. The chain is Double-stranded RNA-binding protein 5 (DRB5) from Oryza sativa subsp. japonica (Rice).